The primary structure comprises 129 residues: Large ribosomal subunit protein bL21 (129 aa).

Residues 100–129 (DGAKPSKKAAEKKAPKAAPKKAAAKAESAE) form a disordered region.

It belongs to the bacterial ribosomal protein bL21 family. Part of the 50S ribosomal subunit. Contacts protein L20.

Functionally, this protein binds to 23S rRNA in the presence of protein L20. This is Large ribosomal subunit protein bL21 from Brucella anthropi (strain ATCC 49188 / DSM 6882 / CCUG 24695 / JCM 21032 / LMG 3331 / NBRC 15819 / NCTC 12168 / Alc 37) (Ochrobactrum anthropi).